The chain runs to 382 residues: Threonine synthase (382 aa).

At Lys-93 the chain carries N6-(pyridoxal phosphate)lysine. Pyridoxal 5'-phosphate contacts are provided by residues Asn-119, 219–223 (GNAGN), and Thr-347.

It belongs to the threonine synthase family. It depends on pyridoxal 5'-phosphate as a cofactor.

The catalysed reaction is O-phospho-L-homoserine + H2O = L-threonine + phosphate. It participates in amino-acid biosynthesis; L-threonine biosynthesis; L-threonine from L-aspartate: step 5/5. Its function is as follows. Catalyzes the gamma-elimination of phosphate from L-phosphohomoserine and the beta-addition of water to produce L-threonine. The protein is Threonine synthase (thrC) of Synechocystis sp. (strain ATCC 27184 / PCC 6803 / Kazusa).